A 291-amino-acid polypeptide reads, in one-letter code: Undecaprenyl-diphosphatase (291 aa).

Transmembrane regions (helical) follow at residues 1–21 (MFII…LTEF), 48–68 (SAFT…AWVF), 102–122 (LHVL…DDFI), 126–146 (LFSV…MIIA), 162–182 (INYF…WPGF), 203–223 (SDFT…LSLL), 231–251 (IADI…GLIA), and 267–287 (FAIY…GFGI).

It belongs to the UppP family.

It localises to the cell membrane. It carries out the reaction di-trans,octa-cis-undecaprenyl diphosphate + H2O = di-trans,octa-cis-undecaprenyl phosphate + phosphate + H(+). Its function is as follows. Catalyzes the dephosphorylation of undecaprenyl diphosphate (UPP). Confers resistance to bacitracin. The sequence is that of Undecaprenyl-diphosphatase from Staphylococcus aureus (strain bovine RF122 / ET3-1).